The primary structure comprises 95 residues: Co-chaperonin GroES (95 aa).

The protein belongs to the GroES chaperonin family. Heptamer of 7 subunits arranged in a ring. Interacts with the chaperonin GroEL.

It localises to the cytoplasm. Functionally, together with the chaperonin GroEL, plays an essential role in assisting protein folding. The GroEL-GroES system forms a nano-cage that allows encapsulation of the non-native substrate proteins and provides a physical environment optimized to promote and accelerate protein folding. GroES binds to the apical surface of the GroEL ring, thereby capping the opening of the GroEL channel. This Rickettsia conorii (strain ATCC VR-613 / Malish 7) protein is Co-chaperonin GroES.